The following is a 318-amino-acid chain: Serpentine receptor class delta-25 (318 aa).

7 consecutive transmembrane segments (helical) span residues 5–25 (LLHS…MYLA), 38–58 (VVIT…FFVM), 88–108 (HMFM…SYLF), 126–146 (IAFY…SIYI), 176–196 (ITLL…YTFI), 226–246 (TFKL…VAMF), and 258–278 (IVSV…IIFV).

The protein belongs to the nematode receptor-like protein srd family.

The protein localises to the membrane. The sequence is that of Serpentine receptor class delta-25 (srd-25) from Caenorhabditis elegans.